A 241-amino-acid polypeptide reads, in one-letter code: NAD-dependent protein deacetylase 2 (241 aa).

Residues 1–241 (MTGKPLVAIL…ALPALLRGLG (241 aa)) enclose the Deacetylase sirtuin-type domain. Residues alanine 13, threonine 17, arginine 25, glutamine 92, valine 94, aspartate 95, and histidine 112 each coordinate NAD(+). Positions 94 and 95 each coordinate nicotinamide. The Proton acceptor role is filled by histidine 112. The Zn(2+) site is built by cysteine 120, cysteine 123, cysteine 145, and cysteine 148. Residues threonine 186, serine 187, asparagine 211, and isoleucine 229 each coordinate NAD(+).

Belongs to the sirtuin family. Class U subfamily. Zn(2+) serves as cofactor.

The protein localises to the cytoplasm. The catalysed reaction is N(6)-acetyl-L-lysyl-[protein] + NAD(+) + H2O = 2''-O-acetyl-ADP-D-ribose + nicotinamide + L-lysyl-[protein]. Its function is as follows. NAD-dependent protein deacetylase which modulates the activities of several enzymes which are inactive in their acetylated form. This Streptomyces coelicolor (strain ATCC BAA-471 / A3(2) / M145) protein is NAD-dependent protein deacetylase 2.